The chain runs to 185 residues: Pre-histone-like nucleoprotein (185 aa).

At Ser2 the chain carries N-acetylserine; by host. A propeptide spanning residues 2 to 23 (SILISPDNNTGWGLCSAGMYGG) is cleaved from the precursor. Thr55 carries the post-translational modification Phosphothreonine; by host. A Phosphoserine; by host modification is found at Ser172. Residues 175–185 (RVPVRSRPPRS) carry the Nuclear localization signal motif.

It belongs to the adenoviridae histone-like nucleoprotein family. Interacts with the core-capsid bridging protein; this interaction bridges the virus core to the capsid. Interacts with host NPM1; this interaction might play a role in placing the pre-histone-like nucleoprotein on the viral DNA or regulating viral gene expression. Interacts with host HMGB1; this interaction inhibits host immune response. Cleaved near the N-terminus by the viral protease during virion maturation to form the mature protein.

The protein localises to the virion. It localises to the host nucleus. Its subcellular location is the host nucleolus. Functionally, plays a role in the inhibition of host immune response within the nucleus. Interacts with cellular nucleosomes and immobilizes the host immune danger signal HMGB1 on chromatin. In turn, prevents HMGB1 release out of the cell and thus decreases inflammation. Also plays a role in the wrapping and condensation of the viral DNA. May also promote viral genome import into the nucleus. The chain is Pre-histone-like nucleoprotein from Human adenovirus F serotype 40 (HAdV-40).